The following is a 372-amino-acid chain: 4-hydroxy-3-methylbut-2-en-1-yl diphosphate synthase (flavodoxin) (372 aa).

Residues Cys270, Cys273, Cys305, and Glu312 each coordinate [4Fe-4S] cluster.

This sequence belongs to the IspG family. It depends on [4Fe-4S] cluster as a cofactor.

It carries out the reaction (2E)-4-hydroxy-3-methylbut-2-enyl diphosphate + oxidized [flavodoxin] + H2O + 2 H(+) = 2-C-methyl-D-erythritol 2,4-cyclic diphosphate + reduced [flavodoxin]. It participates in isoprenoid biosynthesis; isopentenyl diphosphate biosynthesis via DXP pathway; isopentenyl diphosphate from 1-deoxy-D-xylulose 5-phosphate: step 5/6. Its function is as follows. Converts 2C-methyl-D-erythritol 2,4-cyclodiphosphate (ME-2,4cPP) into 1-hydroxy-2-methyl-2-(E)-butenyl 4-diphosphate. This is 4-hydroxy-3-methylbut-2-en-1-yl diphosphate synthase (flavodoxin) from Vibrio campbellii (strain ATCC BAA-1116).